The chain runs to 381 residues: Putrescine N-methyltransferase 3 (381 aa).

The segment at 21–81 (MNGYQNGTSK…TISHDNGNEL (61 aa)) is disordered. Polar residues-rich tracts occupy residues 23–39 (GYQN…QNGT) and 46–81 (HQNG…GNEL). The region spanning 92–329 (PGWFSEFSAL…GVIGYMLCST (238 aa)) is the PABS domain. S-adenosyl-L-methionine is bound by residues Q123, E198, and 229-230 (DG). The Proton acceptor role is filled by D248. Y317 is an S-adenosyl-L-methionine binding site.

Belongs to the class I-like SAM-binding methyltransferase superfamily. Putrescine methyltransferase family. Predominantly expressed in roots.

The catalysed reaction is putrescine + S-adenosyl-L-methionine = N-methylputrescine + S-adenosyl-L-homocysteine + H(+). The protein operates within alkaloid biosynthesis; nicotine biosynthesis. Its function is as follows. Involved in the biosynthesis of pyridine alkaloid natural products, leading mainly to the production of anabasine, anatabine, nicotine and nornicotine, effective deterrents against herbivores with antiparasitic and pesticide properties (neurotoxins); nornicotine serves as the precursor in the synthesis of the carcinogen compound N'-nitrosonornicotine (NNN). Methyltransferase that mediates the conversion of putrescine to N-methylputrescine. Promotes leaves ripening. The protein is Putrescine N-methyltransferase 3 of Nicotiana tabacum (Common tobacco).